Here is a 350-residue protein sequence, read N- to C-terminus: MFS transporter OpS2 (350 aa).

The next 8 helical transmembrane spans lie at 3-23 (FLAG…VADL), 34-54 (GYFF…GGIL), 65-85 (WGAV…LPET), 141-161 (FMTC…NLAI), 174-194 (AIIL…ASVV), 227-247 (MCEN…VFGW), 253-273 (IFWF…SLIF), and 312-332 (PLLG…ICWA).

This sequence belongs to the major facilitator superfamily.

The protein resides in the cell membrane. Functionally, MFS transporter; part of the gene cluster that mediates the biosynthesis of the bibenzoquinone oosporein, a metabolite required for fungal virulence that acts by evading host immunity to facilitate fungal multiplication in insects. The function of this putative MFS transporter remains unclear since its deletion leads to increased oosporein production. In Beauveria bassiana (strain ARSEF 2860) (White muscardine disease fungus), this protein is MFS transporter OpS2.